The sequence spans 97 residues: Large ribosomal subunit protein bL28 (97 aa).

Belongs to the bacterial ribosomal protein bL28 family.

This chain is Large ribosomal subunit protein bL28, found in Rickettsia peacockii (strain Rustic).